We begin with the raw amino-acid sequence, 69 residues long: uncharacterized protein (69 aa).

Interacts with the RNA polymerase core.

This is an uncharacterized protein from Bacillus subtilis (strain 168).